The primary structure comprises 361 residues: MEKKMFNSLMKIHQKYQDLKQLLETDQILNDQKQYLQIAKEIASISEIIEVFQKFLDDQKVLEDAKTILIQEDDPELIQLAKVEIATMSKNIEEYEKKLLILMLPKDKNDEKDVIVEIRGAAGGDEANIFVGDLFKMYHKWADSQKAKVKVLSSSLALAGGFSQIIFQISGQKIYSKLKFESGVHRVQRVPATETMGRIHTSTATVTVMPKIDEKIEIEINPSDLKIDTYRSSGAGGQSVNTTDSAVRITHIPTGIVVTSQDERSQIGNKEIAMGILKSKIYNLELQKQQQKQSDFRKLAGSGARSEKIRTYNYPQDRLTDHRINFSTSLKPIIQGSLNPIIEALLAQEKTELILQNYANK.

An N5-methylglutamine modification is found at Gln238.

It belongs to the prokaryotic/mitochondrial release factor family. Post-translationally, methylated by PrmC. Methylation increases the termination efficiency of RF1.

It is found in the cytoplasm. In terms of biological role, peptide chain release factor 1 directs the termination of translation in response to the peptide chain termination codons UAG and UAA. The sequence is that of Peptide chain release factor 1 from Mesomycoplasma hyopneumoniae (strain J / ATCC 25934 / NCTC 10110) (Mycoplasma hyopneumoniae).